Here is a 269-residue protein sequence, read N- to C-terminus: Formamidopyrimidine-DNA glycosylase (269 aa).

Pro-2 functions as the Schiff-base intermediate with DNA in the catalytic mechanism. Glu-3 functions as the Proton donor in the catalytic mechanism. The Proton donor; for beta-elimination activity role is filled by Lys-57. The DNA site is built by His-90, Arg-109, and Lys-150. An FPG-type zinc finger spans residues 235–269; that stretch reads QVYGRKGEPCRVCGTPIVATKHAQRATFYCRQCQK. The Proton donor; for delta-elimination activity role is filled by Arg-259.

It belongs to the FPG family. In terms of assembly, monomer. Requires Zn(2+) as cofactor.

It catalyses the reaction Hydrolysis of DNA containing ring-opened 7-methylguanine residues, releasing 2,6-diamino-4-hydroxy-5-(N-methyl)formamidopyrimidine.. It carries out the reaction 2'-deoxyribonucleotide-(2'-deoxyribose 5'-phosphate)-2'-deoxyribonucleotide-DNA = a 3'-end 2'-deoxyribonucleotide-(2,3-dehydro-2,3-deoxyribose 5'-phosphate)-DNA + a 5'-end 5'-phospho-2'-deoxyribonucleoside-DNA + H(+). Its function is as follows. Involved in base excision repair of DNA damaged by oxidation or by mutagenic agents. Acts as a DNA glycosylase that recognizes and removes damaged bases. Has a preference for oxidized purines, such as 7,8-dihydro-8-oxoguanine (8-oxoG). Has AP (apurinic/apyrimidinic) lyase activity and introduces nicks in the DNA strand. Cleaves the DNA backbone by beta-delta elimination to generate a single-strand break at the site of the removed base with both 3'- and 5'-phosphates. In Escherichia coli (strain K12 / MC4100 / BW2952), this protein is Formamidopyrimidine-DNA glycosylase.